The primary structure comprises 198 residues: MYAVLTAIIAYLIGCINNAYILTKYTRKIDIRNYGSGNAGATNVLRVLGYKAAAPVFALDVLKGVIAVLIGKYLMGNTGAMIAGIAVVCGHNWPVFLKFRGGKGIATSVGVVMTVSPLLGLIALAIGVTVIVLTKYVSLGSITGSVTFVLLNAIFWNSTQIFIFSLILASLAIFQHRSNIKRLLAGTESKLGQKTEIK.

5 helical membrane-spanning segments follow: residues 2 to 22, 48 to 70, 75 to 97, 111 to 131, and 154 to 174; these read YAVL…AYIL, LGYK…AVLI, MGNT…PVFL, VVMT…VTVI, and IFWN…LAIF.

It belongs to the PlsY family. Probably interacts with PlsX.

The protein localises to the cell membrane. It catalyses the reaction an acyl phosphate + sn-glycerol 3-phosphate = a 1-acyl-sn-glycero-3-phosphate + phosphate. Its pathway is lipid metabolism; phospholipid metabolism. In terms of biological role, catalyzes the transfer of an acyl group from acyl-phosphate (acyl-PO(4)) to glycerol-3-phosphate (G3P) to form lysophosphatidic acid (LPA). This enzyme utilizes acyl-phosphate as fatty acyl donor, but not acyl-CoA or acyl-ACP. The protein is Glycerol-3-phosphate acyltransferase of Thermoanaerobacter pseudethanolicus (strain ATCC 33223 / 39E) (Clostridium thermohydrosulfuricum).